The following is a 264-amino-acid chain: Thiazole synthase (264 aa).

K106 acts as the Schiff-base intermediate with DXP in catalysis. 1-deoxy-D-xylulose 5-phosphate is bound by residues G167, A193–G194, and N215–S216.

It belongs to the ThiG family. Homotetramer. Forms heterodimers with either ThiH or ThiS.

It localises to the cytoplasm. The enzyme catalyses [ThiS sulfur-carrier protein]-C-terminal-Gly-aminoethanethioate + 2-iminoacetate + 1-deoxy-D-xylulose 5-phosphate = [ThiS sulfur-carrier protein]-C-terminal Gly-Gly + 2-[(2R,5Z)-2-carboxy-4-methylthiazol-5(2H)-ylidene]ethyl phosphate + 2 H2O + H(+). The protein operates within cofactor biosynthesis; thiamine diphosphate biosynthesis. In terms of biological role, catalyzes the rearrangement of 1-deoxy-D-xylulose 5-phosphate (DXP) to produce the thiazole phosphate moiety of thiamine. Sulfur is provided by the thiocarboxylate moiety of the carrier protein ThiS. In vitro, sulfur can be provided by H(2)S. In Pseudomonas putida (strain W619), this protein is Thiazole synthase.